Reading from the N-terminus, the 186-residue chain is ADP-ribosylation factor-like protein 8B (186 aa).

Residues 1–19 (MLALISRLLDWFRSLFWKE) constitute an intramembrane region (note=Mediates targeting to membranes). Residues 29 to 35 (QYSGKTT), 71 to 75 (DIGGQ), and 130 to 133 (NKRD) each bind GTP. A Glycyl lysine isopeptide (Lys-Gly) (interchain with G-Cter in ubiquitin) cross-link involves residue lysine 141.

Belongs to the small GTPase superfamily. Arf family. Interacts with tubulin. Interacts with BORCS5; recruits ARL8B to lysosomes. Interacts with VPS41; the interaction mediates the recruitment of the HOPS complex to lysosomes. Interacts (GTP-bound form) with PLEKHM2 (via RUN domain); the interaction is required to recruit the motor protein kinesin-1 on lysosomes. Interacts (GTP-bound form) with PLEKHM1 (via RUN domain); the interaction is required for PLEKHM1 localization to lysosomes and for ARL8B function in delivery and degradation of endocytic and autophagic cargo in lysosomes. PLEKHM1 and PLEKHM2 compete for interaction with ARL8B. Interacts (GTP-bound form) with RUFY1; the interaction is required for RUFY1 endosomal location. When GTP-bound, interacts with RUFY3 and RUFY4, but not with RUFY1, nor RUFY2. In terms of processing, ubiquitinated at Lys-141 by RNF167, leading to its degradation.

It is found in the late endosome membrane. The protein localises to the lysosome membrane. The protein resides in the cytoplasm. It localises to the cytoskeleton. Its subcellular location is the spindle. It is found in the cell projection. The protein localises to the axon. The protein resides in the synapse. It localises to the cytolytic granule membrane. Its subcellular location is the early endosome membrane. It catalyses the reaction GTP + H2O = GDP + phosphate + H(+). Its function is as follows. Small GTPase which cycles between active GTP-bound and inactive GDP-bound states. In its active state, binds to a variety of effector proteins playing a key role in the regulation of lysosomal positioning which is important for nutrient sensing, natural killer cell-mediated cytotoxicity and antigen presentation. Along with its effectors, orchestrates lysosomal transport and fusion. Localizes specifically to lysosomal membranes and mediates anterograde lysosomal motility by recruiting PLEKHM2, which in turn recruits the motor protein kinesin-1 on lysosomes. Required for lysosomal and cytolytic granule exocytosis. Critical factor involved in NK cell-mediated cytotoxicity. Drives the polarization of cytolytic granules and microtubule-organizing centers (MTOCs) toward the immune synapse between effector NK lymphocytes and target cells. In neurons, mediates the anterograde axonal long-range transport of presynaptic lysosome-related vesicles required for presynaptic biogenesis and synaptic function. Also acts as a regulator of endosome to lysosome trafficking pathways of special significance for host defense. Recruits RUFY1 onto early endosomes regulating endosomes to trans-Golgi network proteins retrieval. Regulates cargo trafficking to lysosomes by binding to PLEKHM1 and recruiting the HOPS subunit VPS41, resulting in functional assembly of the HOPS complex on lysosomal membranes. Plays an important role in cargo delivery to lysosomes for antigen presentation and microbial killing. Directs the intersection of CD1d with lipid antigens in lysosomes, and plays a role in intersecting phagosomes with lysosomes to generate phagolysosomes that kill microbes. Involved in the process of MHC II presentation. Regulates the delivery of antigens to lysosomes and the formation of MHC II-peptide complexes through the recruitment of the HOPS complex to lysosomes allowing the fusion of late endosomes to lysosomes. May play a role in chromosome segregation. This is ADP-ribosylation factor-like protein 8B (ARL8B) from Bos taurus (Bovine).